A 1030-amino-acid chain; its full sequence is F-box/WD repeat-containing protein 10 (1030 aa).

The F-box domain occupies 280–329; sequence RDFIRDLPLHLSKYILRMLDKHSLNRCIFVSQHWATLAQQVKVDQSMHSF. WD repeat units follow at residues 466-505, 508-547, 549-584, 587-624, and 626-667; these read GHAG…CVRI, GHQG…KTFK, KDPI…LQKT, GHEG…ERCL, and AFKH…KVIK. The interval 709 to 773 is disordered; it reads KNKVKKSKDK…LSSDDMETPV (65 aa). Over residues 716–733 the composition is skewed to basic and acidic residues; it reads KDKEEEREETSLGDEHSR. Over residues 734–749 the composition is skewed to polar residues; it reads STIQGHSLKDSVSSKQ. Residues 963-992 adopt a coiled-coil conformation; the sequence is FMLMTVKEEKEFAEAKMKEYEASVSTKEVD.

In terms of biological role, probable substrate-recognition component of a SCF (SKP1-CUL1-F-box protein)-type E3 ubiquitin ligase complex which mediates the ubiquitination and subsequent proteasomal degradation of target proteins. Overexpression is leading to degradation of CBX5 and CBX1. In Mus musculus (Mouse), this protein is F-box/WD repeat-containing protein 10 (Fbxw10).